The primary structure comprises 306 residues: Tryptophan 2,3-dioxygenase (306 aa).

The segment at 1–33 (MQPPGDDAAPRCPFAGAHAPDAPHVPEAAGDDA) is disordered. Substrate contacts are provided by residues 75–79 (FIIQH), Tyr137, and Arg141. His264 is a binding site for heme. A substrate-binding site is contributed by Thr278.

It belongs to the tryptophan 2,3-dioxygenase family. In terms of assembly, homotetramer. It depends on heme as a cofactor.

The enzyme catalyses L-tryptophan + O2 = N-formyl-L-kynurenine. The protein operates within amino-acid degradation; L-tryptophan degradation via kynurenine pathway; L-kynurenine from L-tryptophan: step 1/2. In terms of biological role, heme-dependent dioxygenase that catalyzes the oxidative cleavage of the L-tryptophan (L-Trp) pyrrole ring and converts L-tryptophan to N-formyl-L-kynurenine. Catalyzes the oxidative cleavage of the indole moiety. The chain is Tryptophan 2,3-dioxygenase from Burkholderia pseudomallei (strain 1106a).